A 728-amino-acid polypeptide reads, in one-letter code: tRNA (guanine(27)-N(2))-dimethyltransferase (728 aa).

Residues 1–10 (MENMAEEELL) are compositionally biased toward acidic residues. Disordered stretches follow at residues 1–78 (MENM…SKRH) and 98–118 (DVDSASSLNSDNPGTENSQTC). Thr23 bears the Phosphothreonine mark. Residues 23–33 (TPAPDSAPVPA) are compositionally biased toward pro residues. Low complexity predominate over residues 34-46 (PAADTALDSAPTP). The segment covering 47–61 (DSDPAPALAPAPAPA) has biased composition (pro residues). A Phosphoserine modification is found at Ser63. The segment covering 101-118 (SASSLNSDNPGTENSQTC) has biased composition (polar residues). Residues 132–136 (HKLRR) carry the Nucleolar localization signal motif. The segment at 181–203 (YHCIICSATITRRTDMLGHVKRH) adopts a C2H2-type zinc-finger fold. Positions 224 to 683 (EILKETDTDI…APLMQFKSIL (460 aa)) constitute a Trm1 methyltransferase domain. S-adenosyl-L-methionine contacts are provided by Arg257, Asp304, Asp352, and Ala353. Residues Cys483, Cys486, Cys508, and Cys510 each contribute to the Zn(2+) site. Residue Lys580 forms a Glycyl lysine isopeptide (Lys-Gly) (interchain with G-Cter in SUMO2) linkage. A Phosphoserine modification is found at Ser607. The disordered stretch occupies residues 693-728 (GAQSEGQMPPAAEDTVTDRVEMSVSDKAEASGCRRW). A compositionally biased stretch (basic and acidic residues) spans 708–721 (VTDRVEMSVSDKAE).

This sequence belongs to the class I-like SAM-binding methyltransferase superfamily. Trm1 family. As to expression, expressed in various neuronal structures during embryonic development, including spinal ganglia, trigeminal nerve and ganglion, olfactory and nasopharyngeal epithelium, nuclei of the metencephalon, thalamus and medulla oblongata. Also expressed in lung, esophagus, epiglottis, ependyma, vertebral column, spinal cord and brown adipose tissue. Expression persists in the adult brain with dynamically changing patterns in cortex and cerebellum.

The protein localises to the nucleus. The protein resides in the nucleolus. The enzyme catalyses guanosine(27) in tRNA(Tyr) + 2 S-adenosyl-L-methionine = N(2)-dimethylguanosine(27) in tRNA(Tyr) + 2 S-adenosyl-L-homocysteine + 2 H(+). Functionally, specifically dimethylates a single guanine residue at position 27 of tRNA(Tyr) using S-adenosyl-L-methionine as donor of the methyl groups. Dimethylation at position 27 of tRNA(Tyr) is required for efficient translation of tyrosine codons. Also required to maintain 3-(3-amino-3-carboxypropyl)uridine (acp3U) in the D-loop of several cytoplasmic tRNAs. May play a role in motor coordination and exploratory behavior. In Mus musculus (Mouse), this protein is tRNA (guanine(27)-N(2))-dimethyltransferase.